The following is an 88-amino-acid chain: Small ribosomal subunit protein bS16c (88 aa).

It belongs to the bacterial ribosomal protein bS16 family.

Its subcellular location is the plastid. The protein resides in the chloroplast. The protein is Small ribosomal subunit protein bS16c of Lactuca sativa (Garden lettuce).